The sequence spans 1180 residues: Integrin alpha-1 (1180 aa).

The N-terminal stretch at 1 to 28 (MVPRRPASLEVTVACIWLLTVILGFCVS) is a signal peptide. The Extracellular portion of the chain corresponds to 29–1142 (FNVDVKNSMS…SKDGLPGRVP (1114 aa)). One copy of the FG-GAP 1 repeat lies at 30–91 (NVDVKNSMSF…CPVGRERAMP (62 aa)). A disulfide bond links Cys-82 and Cys-92. Asn-100, Asn-105, Asn-112, Asn-217, Asn-317, Asn-341, Asn-402, Asn-418, and Asn-459 each carry an N-linked (GlcNAc...) asparagine glycan. The FG-GAP 2 repeat unit spans residues 101–160 (TSIPNVTEIKENMTFGSTLVTNPNGGFLACGPLYAYRCGHLHYTTGICSDVSPTFQVVNS). Residues 175 to 364 (IVLDGSNSIY…LGERIFALEA (190 aa)) form the VWFA domain. One copy of the FG-GAP 3 repeat lies at 365–417 (TADQSAASFEMEMSQTGFSAHYSQDWVMLGAVGAYDWNGTVVMQKANQMVIPH). FG-GAP repeat units follow at residues 422-474 (QTEP…DGNI), 475-537 (NILQ…RFEY), 556-614 (SCTK…TIRE), and 618-678 (QRIP…FEPN). 4 residues coordinate Ca(2+): Asp-497, Asp-499, Asp-501, and Asp-505. Asn-531 is a glycosylation site (N-linked (GlcNAc...) asparagine). The Ca(2+) site is built by Asp-579, Asn-581, Asp-583, Asp-587, Asp-641, Asn-643, Asp-645, and Asp-649. A disulfide bridge connects residues Cys-687 and Cys-696. N-linked (GlcNAc...) asparagine glycosylation is found at Asn-698, Asn-747, and Asn-779. A disulfide bridge connects residues Cys-702 and Cys-755. An intrachain disulfide couples Cys-807 to Cys-813. N-linked (GlcNAc...) asparagine glycans are attached at residues Asn-820, Asn-839, Asn-882, Asn-907, Asn-938, Asn-965, Asn-973, and Asn-1007. Cys-877 and Cys-885 are joined by a disulfide. Disulfide bonds link Cys-1029–Cys-1062 and Cys-1066–Cys-1073. Residues Asn-1084, Asn-1103, and Asn-1114 are each glycosylated (N-linked (GlcNAc...) asparagine). Residues 1143-1165 (LWVILLSAFAGLLLLMLLILALW) traverse the membrane as a helical segment. Residues 1166-1180 (KIGFFKRPLKKKMEK) lie on the Cytoplasmic side of the membrane. Positions 1168–1172 (GFFKR) match the GFFKR motif motif.

This sequence belongs to the integrin alpha chain family. In terms of assembly, heterodimer of an alpha and a beta subunit. Alpha-1 associates with beta-1. Interacts with RAB21. Interacts (via cytoplasmic domain) with PTPN2; activates PTPN2 phosphatase activity towards EGFR and negatively regulates EGF signaling.

It is found in the membrane. In terms of biological role, integrin alpha-1/beta-1 is a receptor for laminin and collagen. It recognizes the proline-hydroxylated sequence G-F-P-G-E-R in collagen. Involved in anchorage-dependent, negative regulation of EGF-stimulated cell growth. This Rattus norvegicus (Rat) protein is Integrin alpha-1 (Itga1).